The primary structure comprises 68 residues: U2-agatoxin-Ao1u (68 aa).

Residues 1–20 form the signal peptide; it reads MKAIISLLLISAMVFSMIEA. Positions 21-34 are excised as a propeptide; the sequence is VPLEEGLQLFEGER. Cystine bridges form between Cys-36–Cys-52, Cys-43–Cys-57, and Cys-51–Cys-67.

Belongs to the neurotoxin 01 (U2-agtx) family. In terms of tissue distribution, expressed by the venom gland.

The protein localises to the secreted. In terms of biological role, insect active toxin causing rapid but reversible paralysis in crickets. No activity shown in mammals. Does not show effect on mammalian voltage-gated calcium channels. This Agelena orientalis (Funnel-web spider) protein is U2-agatoxin-Ao1u.